Consider the following 486-residue polypeptide: Ribulose bisphosphate carboxylase large chain (486 aa).

The substrate site is built by Asn-126 and Thr-176. Residue Lys-178 is the Proton acceptor of the active site. Lys-180 is a binding site for substrate. The Mg(2+) site is built by Lys-204, Asp-206, and Glu-207. N6-carboxylysine is present on Lys-204. His-296 (proton acceptor) is an active-site residue. Residues Arg-297, His-329, and Ser-381 each contribute to the substrate site.

The protein belongs to the RuBisCO large chain family. Type I subfamily. Heterohexadecamer of 8 large chains and 8 small chains. Requires Mg(2+) as cofactor.

The catalysed reaction is 2 (2R)-3-phosphoglycerate + 2 H(+) = D-ribulose 1,5-bisphosphate + CO2 + H2O. The enzyme catalyses D-ribulose 1,5-bisphosphate + O2 = 2-phosphoglycolate + (2R)-3-phosphoglycerate + 2 H(+). Its function is as follows. RuBisCO catalyzes two reactions: the carboxylation of D-ribulose 1,5-bisphosphate, the primary event in carbon dioxide fixation, as well as the oxidative fragmentation of the pentose substrate. Both reactions occur simultaneously and in competition at the same active site. The protein is Ribulose bisphosphate carboxylase large chain of Methylacidiphilum infernorum (isolate V4) (Methylokorus infernorum (strain V4)).